The primary structure comprises 78 residues: MARRCQLTNKKRNNAFAISHSHRRTKRLQEVNLQWKRIWWEEGKRFVRLRLSTKALKTLKAKGIGAMAREAGIDLNQF.

This sequence belongs to the bacterial ribosomal protein bL28 family.

The protein is Large ribosomal subunit protein bL28 of Synechococcus sp. (strain JA-2-3B'a(2-13)) (Cyanobacteria bacterium Yellowstone B-Prime).